The primary structure comprises 180 residues: Small ribosomal subunit protein uS5 (180 aa).

Residues 13–76 (LEERVVQINR…EAAKKNLIRV (64 aa)) enclose the S5 DRBM domain.

The protein belongs to the universal ribosomal protein uS5 family. Part of the 30S ribosomal subunit. Contacts proteins S4 and S8.

Its function is as follows. With S4 and S12 plays an important role in translational accuracy. Located at the back of the 30S subunit body where it stabilizes the conformation of the head with respect to the body. This is Small ribosomal subunit protein uS5 from Roseiflexus sp. (strain RS-1).